The following is a 433-amino-acid chain: Protein CLP1 homolog (433 aa).

ATP-binding positions include glutamate 22, arginine 61, and 128–133 (DVGKTT).

It belongs to the Clp1 family. Clp1 subfamily.

The protein localises to the nucleus. In terms of biological role, required for endonucleolytic cleavage during polyadenylation-dependent pre-mRNA 3'-end formation. In Brugia malayi (Filarial nematode worm), this protein is Protein CLP1 homolog.